The following is a 209-amino-acid chain: Holliday junction branch migration complex subunit RuvA (209 aa).

The segment at 1-70 is domain I; the sequence is MINYLRGQAI…EEQPLLYGFG (70 aa). Positions 71-149 are domain II; sequence TAPERELFRQ…AWRQLREATT (79 aa). Residues 150–158 form a flexible linker region; sequence TITAILPAA. The interval 158–209 is domain III; it reads AAILEDVQMTLLALGYSQEEIDRAMAVLSQDALFSKNTQPEDWIKGAINWLG.

The protein belongs to the RuvA family. In terms of assembly, homotetramer. Forms an RuvA(8)-RuvB(12)-Holliday junction (HJ) complex. HJ DNA is sandwiched between 2 RuvA tetramers; dsDNA enters through RuvA and exits via RuvB. An RuvB hexamer assembles on each DNA strand where it exits the tetramer. Each RuvB hexamer is contacted by two RuvA subunits (via domain III) on 2 adjacent RuvB subunits; this complex drives branch migration. In the full resolvosome a probable DNA-RuvA(4)-RuvB(12)-RuvC(2) complex forms which resolves the HJ.

It localises to the cytoplasm. The RuvA-RuvB-RuvC complex processes Holliday junction (HJ) DNA during genetic recombination and DNA repair, while the RuvA-RuvB complex plays an important role in the rescue of blocked DNA replication forks via replication fork reversal (RFR). RuvA specifically binds to HJ cruciform DNA, conferring on it an open structure. The RuvB hexamer acts as an ATP-dependent pump, pulling dsDNA into and through the RuvAB complex. HJ branch migration allows RuvC to scan DNA until it finds its consensus sequence, where it cleaves and resolves the cruciform DNA. The sequence is that of Holliday junction branch migration complex subunit RuvA from Microcystis aeruginosa (strain NIES-843 / IAM M-2473).